The primary structure comprises 439 residues: tRNA(Ile)-lysidine synthase (439 aa).

25-30 (SGGLDS) provides a ligand contact to ATP.

Belongs to the tRNA(Ile)-lysidine synthase family.

Its subcellular location is the cytoplasm. It carries out the reaction cytidine(34) in tRNA(Ile2) + L-lysine + ATP = lysidine(34) in tRNA(Ile2) + AMP + diphosphate + H(+). In terms of biological role, ligates lysine onto the cytidine present at position 34 of the AUA codon-specific tRNA(Ile) that contains the anticodon CAU, in an ATP-dependent manner. Cytidine is converted to lysidine, thus changing the amino acid specificity of the tRNA from methionine to isoleucine. This chain is tRNA(Ile)-lysidine synthase, found in Edwardsiella ictaluri (strain 93-146).